The following is a 353-amino-acid chain: Methionine import ATP-binding protein MetN (353 aa).

An ABC transporter domain is found at 8–249 (LDQIDVTFHQ…PKQPLTQDFI (242 aa)). 42 to 49 (GYSGAGKS) lines the ATP pocket.

Belongs to the ABC transporter superfamily. Methionine importer (TC 3.A.1.24) family. The complex is composed of two ATP-binding proteins (MetN), two transmembrane proteins (MetI) and a solute-binding protein (MetQ).

It localises to the cell membrane. The catalysed reaction is L-methionine(out) + ATP + H2O = L-methionine(in) + ADP + phosphate + H(+). It carries out the reaction D-methionine(out) + ATP + H2O = D-methionine(in) + ADP + phosphate + H(+). In terms of biological role, part of the ABC transporter complex MetNIQ involved in methionine import. Responsible for energy coupling to the transport system. The polypeptide is Methionine import ATP-binding protein MetN (Streptococcus pneumoniae (strain ATCC BAA-255 / R6)).